The primary structure comprises 362 residues: Methionine import ATP-binding protein MetN (362 aa).

The ABC transporter domain occupies 2–241 (IHIKNLSKTY…PQHDVTRAMV (240 aa)). 38 to 45 (GPSGAGKS) serves as a coordination point for ATP.

The protein belongs to the ABC transporter superfamily. Methionine importer (TC 3.A.1.24) family. In terms of assembly, the complex is composed of two ATP-binding proteins (MetN), two transmembrane proteins (MetI) and a solute-binding protein (MetQ).

It localises to the cell inner membrane. The catalysed reaction is L-methionine(out) + ATP + H2O = L-methionine(in) + ADP + phosphate + H(+). The enzyme catalyses D-methionine(out) + ATP + H2O = D-methionine(in) + ADP + phosphate + H(+). Part of the ABC transporter complex MetNIQ involved in methionine import. Responsible for energy coupling to the transport system. The protein is Methionine import ATP-binding protein MetN of Bordetella avium (strain 197N).